An 81-amino-acid chain; its full sequence is Defensin-like protein 45 (81 aa).

The first 27 residues, 1–27 (MAITKTSATFVLLIILAASLSNFNVLA), serve as a signal peptide directing secretion. 4 cysteine pairs are disulfide-bonded: cysteine 40–cysteine 79, cysteine 44–cysteine 67, cysteine 53–cysteine 77, and cysteine 57–cysteine 78.

Belongs to the DEFL family.

It localises to the secreted. The polypeptide is Defensin-like protein 45 (Arabidopsis thaliana (Mouse-ear cress)).